The following is a 432-amino-acid chain: Putative D-alanyl-D-alanine carboxypeptidase (432 aa).

Residues 7–25 form a helical; Signal-anchor membrane-spanning segment; that stretch reads ATVLLTFSLSAFAVEYPVL.

Belongs to the peptidase S12 family. YfeW subfamily.

It localises to the cell inner membrane. It catalyses the reaction Preferential cleavage: (Ac)2-L-Lys-D-Ala-|-D-Ala. Also transpeptidation of peptidyl-alanyl moieties that are N-acyl substituents of D-alanine.. This Salmonella gallinarum (strain 287/91 / NCTC 13346) protein is Putative D-alanyl-D-alanine carboxypeptidase.